The sequence spans 377 residues: Mitogen-activated protein kinase pmk-1 (377 aa).

Residues 35-319 (YINLTPIGTG…AKEAMEHEYL (285 aa)) form the Protein kinase domain. ATP contacts are provided by residues 41-49 (IGTGAYGTV) and K64. The Proton acceptor role is filled by D179. Phosphothreonine is present on T191. The TXY motif lies at 191-193 (TGY). Y193 carries the phosphotyrosine modification.

Belongs to the protein kinase superfamily. CMGC Ser/Thr protein kinase family. MAP kinase subfamily. In terms of assembly, interacts with transcription factor atf-7; perhaps in a manner dependent on dual specificity protein kinase sek-1. Mg(2+) serves as cofactor. Requires Mn(2+) as cofactor. Post-translationally, dually phosphorylated on Thr-191 and Tyr-193, probably by sek-1, which activates the enzyme. Increased phosphorylation in response to the heavy metal arsenite. Increased phosphorylation in response to intestinal colonization by probiotic Lactobacillus fermentum strain JDFM216. As to expression, expressed in intestinal cells.

It is found in the nucleus. It carries out the reaction L-seryl-[protein] + ATP = O-phospho-L-seryl-[protein] + ADP + H(+). The catalysed reaction is L-threonyl-[protein] + ATP = O-phospho-L-threonyl-[protein] + ADP + H(+). Activated by phosphorylation on threonine and tyrosine. Inhibited by pyridinyl-imidazole related compounds. In terms of biological role, serine/threonine kinase which responds to activation by environmental stress and pro-inflammatory cytokines by phosphorylating downstream targets. As part of a MAP kinase signaling pathway, plays a role in modulation of lifespan and immunity. Phosphorylates skn-1 which probably regulates skn-1 nuclear translocation in response to oxidative stress. Probably by activating skn-1, involved in the up-regulation of gcs-1 and glutathione-S-transferase gst-4 expression upon bacteria infection. Up-regulates expression of gcs-1 in intestinal cells upon arsenite treatment. Functions downstream of the MAPKK sek-1 and the MAPKKK nsy-1 as the MAP kinase which regulates pathogen resistance and responses to oxidative stress. Required for expression of antimicrobial peptide nlp-29 in response to fungal infection or physical injury. Involved in resistance to the nematotoxic C.cinerea galectin (Cgl2). May play a redundant role with other MAP kinases in susceptibility to anoxia, downstream of tir-1/nsy-1. Phosphorylates transcription factor rnt-1 during oxidative stress which results in rnt-1 stabilization in the intestine. Phosphorylates transcription factor atf-7 during pathogen infection resulting in modulation of target genes. Probably downstream of nsy-1 and sek-1, involved in germline apoptosis induced by heavy metals, such as Cu(2+). Regulates the basal expression of immune effector genes including irg-4, irg-5, mul-1 and drd-50. The chain is Mitogen-activated protein kinase pmk-1 from Caenorhabditis elegans.